The following is a 345-amino-acid chain: Uroporphyrinogen decarboxylase (345 aa).

Substrate-binding positions include 26 to 30 (RQAGR), phenylalanine 45, aspartate 75, tyrosine 151, serine 206, and histidine 320.

The protein belongs to the uroporphyrinogen decarboxylase family. Homodimer.

It is found in the cytoplasm. The catalysed reaction is uroporphyrinogen III + 4 H(+) = coproporphyrinogen III + 4 CO2. Its pathway is porphyrin-containing compound metabolism; protoporphyrin-IX biosynthesis; coproporphyrinogen-III from 5-aminolevulinate: step 4/4. Catalyzes the decarboxylation of four acetate groups of uroporphyrinogen-III to yield coproporphyrinogen-III. This is Uroporphyrinogen decarboxylase from Staphylococcus carnosus (strain TM300).